Here is a 425-residue protein sequence, read N- to C-terminus: Dihydroorotase (425 aa).

Zn(2+) contacts are provided by His-61 and His-63. Substrate is bound by residues His-63–Arg-65 and Asn-95. The Zn(2+) site is built by Asp-153, His-180, and His-233. A substrate-binding site is contributed by Asn-279. Asp-306 is a binding site for Zn(2+). Asp-306 is a catalytic residue. His-310 lines the substrate pocket.

It belongs to the metallo-dependent hydrolases superfamily. DHOase family. Class I DHOase subfamily. The cofactor is Zn(2+).

It carries out the reaction (S)-dihydroorotate + H2O = N-carbamoyl-L-aspartate + H(+). It functions in the pathway pyrimidine metabolism; UMP biosynthesis via de novo pathway; (S)-dihydroorotate from bicarbonate: step 3/3. Its function is as follows. Catalyzes the reversible cyclization of carbamoyl aspartate to dihydroorotate. The polypeptide is Dihydroorotase (Geobacter sulfurreducens (strain ATCC 51573 / DSM 12127 / PCA)).